Here is a 1839-residue protein sequence, read N- to C-terminus: Adenylate cyclase (1839 aa).

Disordered stretches follow at residues methionine 1 to glutamate 21, isoleucine 43 to serine 87, threonine 126 to serine 245, lysine 272 to alanine 315, lysine 332 to aspartate 388, and glutamate 400 to lysine 468. The span at serine 165–serine 211 shows a compositional bias: polar residues. Residues glutamine 212 to glutamine 221 are compositionally biased toward low complexity. The span at arginine 222–glutamine 233 shows a compositional bias: basic and acidic residues. The span at lysine 332–tyrosine 355 shows a compositional bias: basic residues. Residues proline 361–glutamate 376 are compositionally biased toward basic and acidic residues. A compositionally biased stretch (low complexity) spans serine 407–glycine 428. One can recognise a Ras-associating domain in the interval arginine 494–leucine 574. 22 LRR repeats span residues threonine 632–serine 655, leucine 659–alanine 679, lysine 681–leucine 702, asparagine 704–lysine 726, asparagine 727–cysteine 748, asparagine 750–leucine 771, lysine 773–lysine 794, asparagine 795–leucine 816, glutamine 817–threonine 834, arginine 835–methionine 856, asparagine 858–lysine 879, arginine 882–leucine 903, arginine 905–leucine 926, serine 928–glutamate 950, leucine 951–phenylalanine 971, serine 982–phenylalanine 1004, asparagine 1006–asparagine 1027, leucine 1028–histidine 1048, serine 1051–serine 1073, arginine 1074–tryptophan 1096, aspartate 1103–glutamate 1124, and leucine 1135–isoleucine 1160. A PPM-type phosphatase domain is found at arginine 1173–leucine 1439. Residues alanine 1483–serine 1620 enclose the Guanylate cyclase domain. Mg(2+) contacts are provided by aspartate 1488 and aspartate 1531.

It belongs to the adenylyl cyclase class-3 family. It depends on Mg(2+) as a cofactor.

The enzyme catalyses ATP = 3',5'-cyclic AMP + diphosphate. Plays essential roles in regulation of cellular metabolism by catalyzing the synthesis of a second messenger, cAMP. This Lachancea kluyveri (Yeast) protein is Adenylate cyclase (CYR1).